The sequence spans 301 residues: Oxaloacetate tautomerase YisK (301 aa).

Residue Lys99 coordinates oxalate. Mn(2+) is bound by residues Glu148, Glu150, and Asp179. Oxalate contacts are provided by Lys196 and Thr266.

The protein belongs to the FAH family. As to quaternary structure, homodimer. The cofactor is Mg(2+). Mn(2+) is required as a cofactor.

The protein localises to the cytoplasm. It carries out the reaction oxaloacetate = enol-oxaloacetate. It catalyses the reaction oxaloacetate + H(+) = pyruvate + CO2. Its function is as follows. Tautomerase that converts enol-oxaloacetate to the keto form of oxaloacetate. Also shows weak oxaloacetate decarboxylase (ODx), catalyzing the decarboxylation of oxaloacetate (OAA) to pyruvate and CO(2). The polypeptide is Oxaloacetate tautomerase YisK (Bacillus subtilis (strain 168)).